The chain runs to 177 residues: Ferritin heavy chain, oocyte isoform (177 aa).

The region spanning 7–156 (QNFHQECEAA…DHITNLRRMG (150 aa)) is the Ferritin-like diiron domain. Residues glutamate 24, glutamate 59, histidine 62, glutamate 104, and glutamine 138 each contribute to the Fe cation site.

It belongs to the ferritin family. As to quaternary structure, oligomer of 24 subunits. There are two types of subunits: L (light) chain and H (heavy) chain. The functional molecule is roughly spherical and contains a central cavity into which the insoluble mineral iron core is deposited.

The protein localises to the cytoplasm. The catalysed reaction is 4 Fe(2+) + O2 + 4 H(+) = 4 Fe(3+) + 2 H2O. In terms of biological role, stores iron in a soluble, non-toxic, readily available form. Important for iron homeostasis. Has ferroxidase activity. Iron is taken up in the ferrous form and deposited as ferric hydroxides after oxidation. This chain is Ferritin heavy chain, oocyte isoform, found in Xenopus laevis (African clawed frog).